Here is a 444-residue protein sequence, read N- to C-terminus: Probable glycine dehydrogenase (decarboxylating) subunit 1 (444 aa).

The protein belongs to the GcvP family. N-terminal subunit subfamily. As to quaternary structure, the glycine cleavage system is composed of four proteins: P, T, L and H. In this organism, the P 'protein' is a heterodimer of two subunits.

It catalyses the reaction N(6)-[(R)-lipoyl]-L-lysyl-[glycine-cleavage complex H protein] + glycine + H(+) = N(6)-[(R)-S(8)-aminomethyldihydrolipoyl]-L-lysyl-[glycine-cleavage complex H protein] + CO2. Its function is as follows. The glycine cleavage system catalyzes the degradation of glycine. The P protein binds the alpha-amino group of glycine through its pyridoxal phosphate cofactor; CO(2) is released and the remaining methylamine moiety is then transferred to the lipoamide cofactor of the H protein. In Chlorobium luteolum (strain DSM 273 / BCRC 81028 / 2530) (Pelodictyon luteolum), this protein is Probable glycine dehydrogenase (decarboxylating) subunit 1.